The sequence spans 788 residues: MSDPEEERVADSTAHYEEAGKVISIPRPSDEAEGSDVMPEQDDEVQELTTESEENVERHSEFSLSTPKSDDSKPREEVTSLGSASGSQDQDYRLLDYQKGEDDELLFLHKIKAIKETLQTSVRESIATVKIVLIPAGQEIIMPFRVDAPFRFLKEHFAHLLHIPHYVLQITHEGIIVGNNESLIQYGIKPQEIVQVEVFSTLPDQYPVRRIEGLSEGSQIITVTIQTSIDRYEEVAVEIIKSDFHKPFLGGFRHKITGLEYHNAGTQTVPRKIPEKDNLFCRDTQTVFQKKKLQQTTNTTSTQMTKIGVYVSNMTDKLLKPGNYFSAAEYHARRLHAVIVIQTSYRRWHAKRYVESLRKQKKLRLEWEEEQELLKIQEKEEWIRMDYYRRHNPKTTEDFELLYNALELWRQEEVEQICHYSSEAERKAALCELLEKETQMIASIGRHRSAARMERQDAAIQAFLDKCSAPNVWRRGDGKTIEMDTQFTIRARELQSIYKCILLKDLSQDERLDILLTLKHTVKEHECKLTQEILELIDREVDLMMRGVKPHNLEGLRKRITTLFIHYIKTPLFNPEVAKYLKVPQDPLKFYDTIYFCHSCQNYLPSVEFSVSPTSHRVYRCRHCINLENETQRRESFLKYKCLLQRLYYSEADYGDNSQIAFLMQLQDIKYLTENIWASQSALSAWDDLNDLVMVRWDKHVEWSPWNCILLTKDESTAHLRLPSIEKGYGHHFVHKIKHKHILAKNYFSQIPTLASLILNDDEVEDIRSKHSTKSPPKIIITRRIQPH.

The tract at residues 1–89 (MSDPEEERVA…SLGSASGSQD (89 aa)) is disordered. The segment covering 7-20 (ERVADSTAHYEEAG) has biased composition (basic and acidic residues). Acidic residues predominate over residues 31 to 54 (EAEGSDVMPEQDDEVQELTTESEE). Positions 68–78 (KSDDSKPREEV) are enriched in basic and acidic residues. A compositionally biased stretch (polar residues) spans 80–89 (SLGSASGSQD). The 77-residue stretch at 127–203 (ATVKIVLIPA…VQVEVFSTLP (77 aa)) folds into the Ubiquitin-like domain. An IQ domain is found at 334–363 (RLHAVIVIQTSYRRWHAKRYVESLRKQKKL).

In terms of assembly, component of the axonemal radial spoke 1 (RS1) complex, at least composed of spoke head proteins RSPH1, RSPH3B, RSPH9 and the cilia-specific component RSPH4A or sperm-specific component RSPH6A, spoke stalk proteins RSPH14, DNAJB13, DYDC1, ROPN1L and NME5, and the anchor protein IQUB. Does not appear to be part of radial spoke complexes 2 or 3 (RS2 or RS3). Interacts with CALM1. Interacts with DNAJB13. Interacts with DYNLL2. Interacts with NME5. Interacts with RSPH3. Interacts with RSPH9. Interacts with ZMYND10. Interacts with calmodulin; the interaction occurs in conditions of low but not high calcium. Expressed in the flagellum of sperm cells and cilia of tracheal epithelial cells (at protein level). High expression in testis, also present in brain and lung.

The protein resides in the cytoplasm. The protein localises to the cytoskeleton. Its subcellular location is the flagellum axoneme. It localises to the cell projection. It is found in the cilium. Functionally, anchors the radial spoke 1 (RS1) complex to the A microtubule of outer doublet microtubules in axonemes. The triple radial spokes (RS1, RS2 and RS3) are required to modulate beating of the sperm flagellum. May play a role in inhibiting signaling via MAPK1/ERK2 and MAPK3/ERK1. Additionally, may play a role in the functioning of cilia. Not required for the functioning of tracheal or ependymal cilia. In Mus musculus (Mouse), this protein is IQ motif and ubiquitin-like domain-containing protein (Iqub).